The sequence spans 151 residues: Probable cGMP 3',5'-cyclic phosphodiesterase subunit delta (151 aa).

It belongs to the PDE6D/unc-119 family. As to quaternary structure, interacts with Pde6.

The protein localises to the nucleus. The protein resides in the cytoplasm. The protein is Probable cGMP 3',5'-cyclic phosphodiesterase subunit delta of Anopheles gambiae (African malaria mosquito).